The primary structure comprises 206 residues: Dephospho-CoA kinase (206 aa).

Residues 4–200 enclose the DPCK domain; the sequence is IVALTGGIGS…AHYLQLASQF (197 aa). ATP is bound at residue 12-17; that stretch reads GSGKST.

The protein belongs to the CoaE family.

The protein resides in the cytoplasm. It catalyses the reaction 3'-dephospho-CoA + ATP = ADP + CoA + H(+). The protein operates within cofactor biosynthesis; coenzyme A biosynthesis; CoA from (R)-pantothenate: step 5/5. Catalyzes the phosphorylation of the 3'-hydroxyl group of dephosphocoenzyme A to form coenzyme A. The protein is Dephospho-CoA kinase of Shigella boydii serotype 4 (strain Sb227).